The primary structure comprises 156 residues: Transcriptional regulator MraZ (156 aa).

SpoVT-AbrB domains follow at residues 7 to 54 and 84 to 127; these read NIEV…PESV and VEVV…AKER.

This sequence belongs to the MraZ family. Forms oligomers.

Its subcellular location is the cytoplasm. It localises to the nucleoid. The chain is Transcriptional regulator MraZ from Bacteroides thetaiotaomicron (strain ATCC 29148 / DSM 2079 / JCM 5827 / CCUG 10774 / NCTC 10582 / VPI-5482 / E50).